Here is a 211-residue protein sequence, read N- to C-terminus: Thymidylate kinase (211 aa).

Position 7 to 14 (7 to 14) interacts with ATP; that stretch reads GIDASGKS.

This sequence belongs to the thymidylate kinase family.

The catalysed reaction is dTMP + ATP = dTDP + ADP. Phosphorylation of dTMP to form dTDP in both de novo and salvage pathways of dTTP synthesis. The polypeptide is Thymidylate kinase (Mesomycoplasma hyopneumoniae (strain 7448) (Mycoplasma hyopneumoniae)).